A 721-amino-acid polypeptide reads, in one-letter code: Translation initiation factor eIF2B subunit epsilon (721 aa).

Low complexity predominate over residues 1–13 (MAAPVVAPPGVVV). The segment at 1–40 (MAAPVVAPPGVVVSRANKRSGAGPGGSGGGGARGAEEEPP) is disordered. Residue Ala-2 is modified to N-acetylalanine. Arg-19 is subject to Omega-N-methylarginine. Positions 22–33 (AGPGGSGGGGAR) are enriched in gly residues. Ser-27 bears the Phosphoserine mark. Residues Lys-61 and Lys-103 each participate in a glycyl lysine isopeptide (Lys-Gly) (interchain with G-Cter in ubiquitin) cross-link. A Phosphoserine modification is found at Ser-130. Glycyl lysine isopeptide (Lys-Gly) (interchain with G-Cter in ubiquitin) cross-links involve residues Lys-141 and Lys-217. Thr-322 carries the post-translational modification Phosphothreonine. Disordered regions lie at residues 444–483 (PEGS…MKGY) and 523–547 (EESE…SPQM). A phosphoserine mark is found at Ser-450, Ser-466, Ser-469, Ser-532, and Ser-540. Composition is skewed to acidic residues over residues 456 to 471 (AEED…DSGA) and 523 to 537 (EESE…DSEE). One can recognise a W2 domain in the interval 543 to 720 (GSPQMDDIKV…KEAEEESSED (178 aa)). The residue at position 544 (Ser-544) is a Phosphoserine; by DYRK2. At Ser-717 the chain carries Phosphoserine.

This sequence belongs to the eIF-2B gamma/epsilon subunits family. In terms of assembly, component of the translation initiation factor 2B (eIF2B) complex which is a heterodecamer of two sets of five different subunits: alpha, beta, gamma, delta and epsilon. Subunits alpha, beta and delta comprise a regulatory subcomplex and subunits epsilon and gamma comprise a catalytic subcomplex. Within the complex, the hexameric regulatory complex resides at the center, with the two heterodimeric catalytic subcomplexes bound on opposite sides. Phosphorylated at Ser-544 by DYRK2; this is required for subsequent phosphorylation by GSK3B. Phosphorylated on serine and threonine residues by GSK3B; phosphorylation inhibits its function. Post-translationally, polyubiquitinated, probably by NEDD4.

It localises to the cytoplasm. It is found in the cytosol. Activated by the chemical integrated stress response (ISR) inhibitor ISRIB which stimulates guanine nucleotide exchange factor activity for both phosphorylated and unphosphorylated eIF2. Functionally, acts as a component of the translation initiation factor 2B (eIF2B) complex, which catalyzes the exchange of GDP for GTP on eukaryotic initiation factor 2 (eIF2) gamma subunit. Its guanine nucleotide exchange factor activity is repressed when bound to eIF2 complex phosphorylated on the alpha subunit, thereby limiting the amount of methionyl-initiator methionine tRNA available to the ribosome and consequently global translation is repressed. This is Translation initiation factor eIF2B subunit epsilon (EIF2B5) from Homo sapiens (Human).